The primary structure comprises 236 residues: Probable chemoreceptor glutamine deamidase CheD (236 aa).

The segment at 1–20 (MIEFGKRATPQSAADAVRGD) is disordered.

Belongs to the CheD family.

It catalyses the reaction L-glutaminyl-[protein] + H2O = L-glutamyl-[protein] + NH4(+). Functionally, probably deamidates glutamine residues to glutamate on methyl-accepting chemotaxis receptors (MCPs), playing an important role in chemotaxis. The protein is Probable chemoreceptor glutamine deamidase CheD of Ralstonia pickettii (strain 12J).